The sequence spans 257 residues: Ribonuclease HII (257 aa).

Residues 70–257 enclose the RNase H type-2 domain; that stretch reads EFIAGIDEVG…PIKSMVAGGN (188 aa). Positions 76, 77, and 168 each coordinate a divalent metal cation.

It belongs to the RNase HII family. Mn(2+) is required as a cofactor. It depends on Mg(2+) as a cofactor.

The protein localises to the cytoplasm. The catalysed reaction is Endonucleolytic cleavage to 5'-phosphomonoester.. Its function is as follows. Endonuclease that specifically degrades the RNA of RNA-DNA hybrids. In Streptococcus suis (strain 98HAH33), this protein is Ribonuclease HII.